We begin with the raw amino-acid sequence, 1158 residues long: Putative HERC2-like protein 3 (1158 aa).

The tract at residues 281–302 (PRKKRVPKKPESTDDEEKIGNE) is disordered. The segment covering 293 to 302 (TDDEEKIGNE) has biased composition (acidic residues). The region spanning 587 to 660 (SGPELAAMMK…NYDLKLAELP (74 aa)) is the MIB/HERC2 domain. Residues 662–684 (PAQPSAEDSDTEDDSEAEQTERN) are disordered. A compositionally biased stretch (acidic residues) spans 668–679 (EDSDTEDDSEAE).

This is Putative HERC2-like protein 3 (HERC2P3) from Homo sapiens (Human).